The primary structure comprises 433 residues: GTPase Der (433 aa).

2 consecutive EngA-type G domains span residues 3-167 (NIVA…QDTI) and 174-349 (PKIA…TNKT). Residues 9–16 (GRPNVGKS), 56–60 (DTGGY), 119–122 (NKAD), 180–187 (GRPNVGKS), 227–231 (DTAGI), and 292–295 (NKWD) each bind GTP. The 84-residue stretch at 350–433 (QKISTAALNQ…VPVQLVFRKK (84 aa)) folds into the KH-like domain.

This sequence belongs to the TRAFAC class TrmE-Era-EngA-EngB-Septin-like GTPase superfamily. EngA (Der) GTPase family. As to quaternary structure, associates with the 50S ribosomal subunit.

Functionally, GTPase that plays an essential role in the late steps of ribosome biogenesis. The chain is GTPase Der from Amoebophilus asiaticus (strain 5a2).